The chain runs to 748 residues: MSNEAKCPFNHTAGSGTSNRDWWPKQLRVDLLAQHSSKSNPMGEDFDYAEAFKSLDLAAVKADLAKVMTDSQDWWPADFGHYGPLFVRMAWHSAGTYRIGDGRGGAGRGQQRFAPLNSWPDNVNLDKARRLLWPVKQKYGNKISWADLLILTGNVALETMGFKTFGFAGGRADVWEPDLDVYWGTESTWLGGDDRYGKGKGSSSQGEIPADAHRHGQEQARTAPAGRNLENPLAAVQMGLIYVNPEGPEGNPDPLAAAHDIRETFARMAMDDEETVALIAGGHTFGKTHGAGDAKHVGREPEGEDMDSQGLGWKSSFGSGVGGDTISSGLEVTWTQTPAQWSNYFFENLFKYEWELTKSPAGAHQWVAKGADAVIPHAHGGAPLLPTMLTTDLSLRFDPAYEKISRRFLEHPEQFADAFARAWFKLTHRDLGPRSRYLGPEVPAEELIWQDPLPQAEGAQIDAADVAALKAKVLGSGLSVPELVATAWASASTFRGGDMRGGANGARIRLAPQKDWAANQPAQLAKVLKTLEGIQSAFNQGGKKVSLADLIVLAGSAAVEKAAQDAGVAVAVPFRAGRVDASQEQTDAASFAPLEPIVDGFRNFQKQRYAVRGEDMLIDKAQQLTLSAPEMTVLVGGLRVLGNNVGGSTKGMFTDRVGVLSNDFFVNLLDMATEWKSTSPAQEEFEGRDRKTGAVKWAGTRVDLVFGSNAVLRALAEVYASADAKEKFVKDFVAAWVKVMELDRFDLK.

The segment at residues 91-242 is a cross-link (tryptophyl-tyrosyl-methioninium (Trp-Tyr) (with M-268)); sequence WHSAGTYRIG…LAAVQMGLIY (152 aa). H92 acts as the Proton acceptor in catalysis. Residues 194–223 form a disordered region; it reads DRYGKGKGSSSQGEIPADAHRHGQEQARTA. Residues 242-268 constitute a cross-link (tryptophyl-tyrosyl-methioninium (Tyr-Met) (with W-91)); that stretch reads YVNPEGPEGNPDPLAAAHDIRETFARM. H283 serves as a coordination point for heme b. A disordered region spans residues 288–310; it reads THGAGDAKHVGREPEGEDMDSQG. Residues 290-301 show a composition bias toward basic and acidic residues; that stretch reads GAGDAKHVGREP.

The protein belongs to the peroxidase family. Peroxidase/catalase subfamily. In terms of assembly, homodimer or homotetramer. It depends on heme b as a cofactor. Formation of the three residue Trp-Tyr-Met cross-link is important for the catalase, but not the peroxidase activity of the enzyme.

It carries out the reaction H2O2 + AH2 = A + 2 H2O. The enzyme catalyses 2 H2O2 = O2 + 2 H2O. Functionally, bifunctional enzyme with both catalase and broad-spectrum peroxidase activity. The polypeptide is Catalase-peroxidase (Herbaspirillum seropedicae).